A 419-amino-acid chain; its full sequence is Light-dependent chlorophyll f synthase (419 aa).

Helical transmembrane passes span 73 to 90 (YIGW…TAAI), 162 to 177 (HFII…EWEL), 186 to 200 (WISL…ASVS), 241 to 262 (LHQM…HGSL), and 323 to 337 (CLAA…SAAI). H162 is an a chlorophyll binding site. A chlorophyll is bound at residue H242.

Belongs to the reaction center PufL/M/PsbA/D family. As to quaternary structure, homodimer.

It localises to the cellular thylakoid membrane. In terms of biological role, synthesizes chlorophyll f or chlorophyllide f (Chl f, 2-formyl chlorophyll a), probably by oxidation of chlorophyll a or chlorophyllide a and reduction of plastoquinone. The reaction is probably light-dependent. Chl f absorbs far red light (FRL, 707 nm in 100% methanol), and is synthesized when cells are grown in FRL, where it provides the advantage of extending the spectral range of harvested light in terrestrial cyanobacteria. Chl f synthesis is probably light-dependent. In Synechococcus sp. (strain ATCC 29403 / PCC 7335), this protein is Light-dependent chlorophyll f synthase.